Reading from the N-terminus, the 213-residue chain is RNA chaperone ProQ (213 aa).

The segment at 105–150 (ESQEKAKAKRAAQTPKAAPAGKAPAKKAPKKVAVPARKTERPAKAA) is disordered. Residues 115–127 (AAQTPKAAPAGKA) are compositionally biased toward low complexity.

Belongs to the ProQ family.

The protein localises to the cytoplasm. Functionally, RNA chaperone with significant RNA binding, RNA strand exchange and RNA duplexing activities. The sequence is that of RNA chaperone ProQ from Shewanella oneidensis (strain ATCC 700550 / JCM 31522 / CIP 106686 / LMG 19005 / NCIMB 14063 / MR-1).